Reading from the N-terminus, the 123-residue chain is Thioredoxin domain-containing protein 17 (123 aa).

At Ala2 the chain carries N-acetylalanine. A Thioredoxin domain is found at 41–123 (SWCPDCVEAE…SLVEMIFSED (83 aa)). Catalysis depends on nucleophile residues Cys43 and Cys46. An intrachain disulfide couples Cys43 to Cys46.

This sequence belongs to the thioredoxin family. In terms of assembly, interacts with TRXR1 and DYNLL1/DNCL1. In terms of processing, the oxidized protein is reduced by TRXR1.

It localises to the cytoplasm. In terms of biological role, disulfide reductase. May participate in various redox reactions through the reversible oxidation of its active center dithiol to a disulfide and catalyze dithiol-disulfide exchange reactions. Modulates TNF-alpha signaling and NF-kappa-B activation. Has peroxidase activity and may contribute to the elimination of cellular hydrogen peroxide. The protein is Thioredoxin domain-containing protein 17 (Txndc17) of Mus musculus (Mouse).